We begin with the raw amino-acid sequence, 518 residues long: ETHYLENE INSENSITIVE 3-like 2 protein (518 aa).

The stretch at 37–73 (DDLSSDEEMEIEELEKKIWRDKQRLKRLKEMAKNGLG) forms a coiled coil. The interval 450–518 (FNHPNDLYRP…GQELPTSWIQ (69 aa)) is disordered. 2 stretches are compositionally biased toward polar residues: residues 475-484 (PSPSTLNQNL) and 500-518 (GTEN…SWIQ).

The protein belongs to the EIN3 family. In terms of assembly, acts as a homodimer to bind the primary ethylene response element.

The protein localises to the nucleus. Functionally, probable transcription factor acting as a positive regulator in the ethylene response pathway. Could bind the primary ethylene response element present in the ETHYLENE-RESPONSE-FACTOR1 promoter. This is ETHYLENE INSENSITIVE 3-like 2 protein (EIL2) from Arabidopsis thaliana (Mouse-ear cress).